The primary structure comprises 257 residues: Protein IMPACT homolog (257 aa).

Positions 9–102 constitute an RWD domain; the sequence is AEIESLASIF…SLVQDFIRDL (94 aa).

The protein belongs to the IMPACT family. As to quaternary structure, interacts with gcn-1; prevents the interaction of gcn-1 with gcn-2 and inhibits gcn-2 kinase activity. Interaction with rpl-39; this interaction occurs in a gcn-1-independent manner. Associates with ribosomes; this interaction occurs in a gcn-1-independent manner. Associates with actin; this interaction occurs in a gcn-1-independent manner.

It localises to the cytoplasm. Functionally, translational regulator that ensures constant high levels of translation under amino acid starvation. Plays a role as a negative regulator of the gcn-2 kinase activity; impairs gcn-1-mediated gcn-2 activation, and hence gcn-2-mediated eIF-2-alpha phosphorylation and subsequent down-regulation of protein synthesis in amino acid-starved cells. Plays a role in differentiation of neuronal cells by stimulating neurite outgrowth. The sequence is that of Protein IMPACT homolog from Caenorhabditis elegans.